The sequence spans 1479 residues: ESX secretion system protein EccC (1479 aa).

Residues 1–235 are Cytoplasmic-facing; that stretch reads MSQLWVLYET…SQEGDGDPRG (235 aa). The helical transmembrane segment at 236-256 threads the bilayer; sequence LWLMVLPPVMMLLVIGAVALI. Over 257-259 the chain is Extracellular; the sequence is QPR. The helical transmembrane segment at 260–280 threads the bilayer; the sequence is GVFIMISIAMFATTIVTSTAQ. At 281 to 1479 the chain is on the cytoplasmic side; it reads YMREKKARQM…DQKIQIPKVE (1199 aa). Residues 291–321 are a coiled coil; the sequence is RKEKRRRIYTNYLEQKREELQALSEKQRNVL. 2 FtsK domains span residues 652–848 and 984–1168; these read NDVV…NDSK and QSDY…SEKF. ATP is bound at residue 672-679; it reads GTTGSGKS. Glutamate 785 is a catalytic residue. Residues 1004 to 1009, asparagine 1036, aspartate 1105, isoleucine 1197, aspartate 1206, 1287 to 1291, and isoleucine 1475 contribute to the ATP site; these read GYGKST and RKGKT. In terms of domain architecture, FtsK 3 spans 1267-1444; sequence VRPVAINMRT…ILVTKKSEQS (178 aa).

In terms of assembly, whole protein oligomerizes in native gels. Part of the ESX / type VII secretion system (T7SS), which is composed of cytosolic and membrane components. The ESX membrane complex is composed of EccB, EccC and EccD.

Its subcellular location is the cell membrane. Its activity is regulated as follows. EsxB binding to the third FtsK domain causes multimerization; a subsequent unknown step relieves the allosteric inhibition of linker 2 on FtsK domain 1, activating the ATPase activity. Its function is as follows. Part of the ESX specialized secretion system, which exports proteins from the cell including EsxA (ESAT-6) and EsxB (CFP-10). Might be the translocase subunit. Probably only the first FtsK domain can hydrolyze ATP. The protein is ESX secretion system protein EccC of Geobacillus thermodenitrificans (strain NG80-2).